We begin with the raw amino-acid sequence, 274 residues long: Ceramide synthase (274 aa).

One can recognise a TLC domain in the interval 34–261 (ADAVIVSARL…ICRGACRLFW (228 aa)). The next 4 helical transmembrane spans lie at 130–150 (FLMV…SVVW), 159–179 (LGCM…KILI), 194–214 (ALML…LYWA), and 223–243 (LLAV…LLLA).

Expressed in testis. Expressed in the retina with higher expression levels in the macular than in the peripheral region.

It is found in the golgi apparatus membrane. The protein localises to the endoplasmic reticulum membrane. The enzyme catalyses sphing-4-enine + octadecanoyl-CoA = N-octadecanoylsphing-4-enine + CoA + H(+). The catalysed reaction is eicosanoyl-CoA + sphing-4-enine = N-eicosanoyl-sphing-4-enine + CoA + H(+). It carries out the reaction sphing-4-enine + hexadecanoyl-CoA = N-hexadecanoylsphing-4-enine + CoA + H(+). Its function is as follows. Involved in ceramide synthesis. The sequence is that of Ceramide synthase from Homo sapiens (Human).